Reading from the N-terminus, the 227-residue chain is NADH-quinone oxidoreductase subunit C (227 aa).

Belongs to the complex I 30 kDa subunit family. As to quaternary structure, NDH-1 is composed of 14 different subunits. Subunits NuoB, C, D, E, F, and G constitute the peripheral sector of the complex.

Its subcellular location is the cell inner membrane. The catalysed reaction is a quinone + NADH + 5 H(+)(in) = a quinol + NAD(+) + 4 H(+)(out). Functionally, NDH-1 shuttles electrons from NADH, via FMN and iron-sulfur (Fe-S) centers, to quinones in the respiratory chain. The immediate electron acceptor for the enzyme in this species is believed to be ubiquinone. Couples the redox reaction to proton translocation (for every two electrons transferred, four hydrogen ions are translocated across the cytoplasmic membrane), and thus conserves the redox energy in a proton gradient. This Legionella pneumophila (strain Paris) protein is NADH-quinone oxidoreductase subunit C.